The following is a 62-amino-acid chain: Large ribosomal subunit protein uL29 (62 aa).

It belongs to the universal ribosomal protein uL29 family.

The sequence is that of Large ribosomal subunit protein uL29 from Chromobacterium violaceum (strain ATCC 12472 / DSM 30191 / JCM 1249 / CCUG 213 / NBRC 12614 / NCIMB 9131 / NCTC 9757 / MK).